A 501-amino-acid chain; its full sequence is Glutamate--tRNA ligase (501 aa).

The 'HIGH' region motif lies at 11-21 (PSPTGFLHIGN). The 'KMSKS' region signature appears at 257–261 (KLSKR). An ATP-binding site is contributed by Lys-260.

It belongs to the class-I aminoacyl-tRNA synthetase family. Glutamate--tRNA ligase type 1 subfamily. Monomer.

It localises to the cytoplasm. It carries out the reaction tRNA(Glu) + L-glutamate + ATP = L-glutamyl-tRNA(Glu) + AMP + diphosphate. Functionally, catalyzes the attachment of glutamate to tRNA(Glu) in a two-step reaction: glutamate is first activated by ATP to form Glu-AMP and then transferred to the acceptor end of tRNA(Glu). This is Glutamate--tRNA ligase from Limosilactobacillus reuteri subsp. reuteri (strain JCM 1112) (Lactobacillus reuteri).